The following is a 270-amino-acid chain: Photosystem I chlorophyll a/b-binding protein 6, chloroplastic (270 aa).

The transit peptide at 1–33 (MAFAIASALTSTLTLSTSRVQNPTQRRPHVAST) directs the protein to the chloroplast. Residues 16 to 36 (STSRVQNPTQRRPHVASTSST) form a disordered region. Positions 19 to 36 (RVQNPTQRRPHVASTSST) are enriched in polar residues. Trp68 is a chlorophyll b binding site. Positions 88 and 107 each coordinate chlorophyll a. Arg112 lines the chlorophyll b pocket. A helical membrane pass occupies residues 146-164 (YFADSTTLFVAQMVLMGWA). Residues Glu165 and Arg168 each coordinate chlorophyll b. The chlorophyll a site is built by Lys221, Glu222, Asn225, Arg227, Gln239, and His254. Residues 228–244 (LAMLAFLGFCFQATYTS) form a helical membrane-spanning segment.

The protein belongs to the light-harvesting chlorophyll a/b-binding (LHC) protein family. In terms of assembly, the LHC complex consists of chlorophyll a-b binding proteins. Homodimer. Binds pigments. Element of the NAD(P)H dehydrogenase-photosystem I supercomplex (NDH-PSI). Requires Binds at least 14 chlorophylls (8 Chl-a and 6 Chl-b) and carotenoids such as lutein and neoxanthin. as cofactor. Photoregulated by reversible phosphorylation of its threonine residues.

Its subcellular location is the plastid. The protein localises to the chloroplast thylakoid membrane. The light-harvesting complex (LHC) functions as a light receptor, it captures and delivers excitation energy to photosystems with which it is closely associated. Seems involved in the function of the photosystem I in low light conditions, when other LHCA proteins are less abundant. Required, together with LHCA5, for the formation of a full-size NAD(P)H dehydrogenase-photosystem I supercomplex (NDH-PSI) that triggers cyclic and chlororespiratory electron transport in chloroplast thylakoids, especially under stress conditions (e.g. increased light intensity). This is Photosystem I chlorophyll a/b-binding protein 6, chloroplastic from Arabidopsis thaliana (Mouse-ear cress).